The sequence spans 148 residues: UPF0179 protein Ta1159 (148 aa).

Belongs to the UPF0179 family.

The protein is UPF0179 protein Ta1159 of Thermoplasma acidophilum (strain ATCC 25905 / DSM 1728 / JCM 9062 / NBRC 15155 / AMRC-C165).